Here is a 372-residue protein sequence, read N- to C-terminus: Coxsackievirus and adenovirus receptor homolog (372 aa).

Residues 1–22 (MDMRTSFLCVTYVILLTGSACG) form the signal peptide. 2 consecutive Ig-like C2-type domains span residues 23–140 (LQIT…YLLT) and 130–234 (PGIA…VTIT). The Extracellular portion of the chain corresponds to 23 to 241 (LQITSTGQTS…TITQPPNTAG (219 aa)). Intrachain disulfides connect cysteine 45-cysteine 124, cysteine 150-cysteine 227, and cysteine 166-cysteine 216. N-linked (GlcNAc...) asparagine glycosylation occurs at asparagine 205. Residues 242–262 (IIAGVIICILLLLILLALILF) traverse the membrane as a helical segment. Residues 263 to 372 (CCCRARHKKK…PAQNKDGSIV (110 aa)) lie on the Cytoplasmic side of the membrane. Residues 286–352 (PPPKSRVSTA…PPSRMAGPNL (67 aa)) form a disordered region. A compositionally biased stretch (polar residues) spans 291–317 (RVSTARSFTSVGSQRSSLGSMSPSNLH). Over residues 318 to 336 (EYSKPQYDKIPSEEYDRPP) the composition is skewed to basic and acidic residues.

Monomer. Probably homodimer formed by 2 molecules on adjacent cells.

It localises to the cell membrane. It is found in the basolateral cell membrane. Its subcellular location is the cell junction. The protein resides in the tight junction. The protein localises to the adherens junction. Functionally, may function as a homophilic cell adhesion molecule and be essential for tight junction integrity. May also be involved in transepithelial migration of leukocytes through adhesive interactions with jaml. The interaction between both receptors may also mediate the activation of gamma-delta T-cells, a subpopulation of T-cells residing in epithelia and involved in tissue homeostasis and repair. The protein is Coxsackievirus and adenovirus receptor homolog (cxadr) of Danio rerio (Zebrafish).